Reading from the N-terminus, the 218-residue chain is dTTP/UTP pyrophosphatase (218 aa).

Residues 1 to 10 (MTASPSSAEG) show a composition bias toward polar residues. Residues 1–20 (MTASPSSAEGSSGLPDRPKL) form a disordered region. The active-site Proton acceptor is the Asp-87.

Belongs to the Maf family. YhdE subfamily. Requires a divalent metal cation as cofactor.

Its subcellular location is the cytoplasm. It carries out the reaction dTTP + H2O = dTMP + diphosphate + H(+). It catalyses the reaction UTP + H2O = UMP + diphosphate + H(+). Nucleoside triphosphate pyrophosphatase that hydrolyzes dTTP and UTP. May have a dual role in cell division arrest and in preventing the incorporation of modified nucleotides into cellular nucleic acids. This is dTTP/UTP pyrophosphatase from Gluconobacter oxydans (strain 621H) (Gluconobacter suboxydans).